A 265-amino-acid polypeptide reads, in one-letter code: 3-methyl-2-oxobutanoate hydroxymethyltransferase (265 aa).

2 residues coordinate Mg(2+): Asp44 and Asp83. Residues 44-45 (DS), Asp83, and Lys113 each bind 3-methyl-2-oxobutanoate. A Mg(2+)-binding site is contributed by Glu115. Glu183 (proton acceptor) is an active-site residue.

Belongs to the PanB family. In terms of assembly, homodecamer; pentamer of dimers. The cofactor is Mg(2+).

Its subcellular location is the cytoplasm. The enzyme catalyses 3-methyl-2-oxobutanoate + (6R)-5,10-methylene-5,6,7,8-tetrahydrofolate + H2O = 2-dehydropantoate + (6S)-5,6,7,8-tetrahydrofolate. Its pathway is cofactor biosynthesis; (R)-pantothenate biosynthesis; (R)-pantoate from 3-methyl-2-oxobutanoate: step 1/2. Functionally, catalyzes the reversible reaction in which hydroxymethyl group from 5,10-methylenetetrahydrofolate is transferred onto alpha-ketoisovalerate to form ketopantoate. This Leptospira borgpetersenii serovar Hardjo-bovis (strain L550) protein is 3-methyl-2-oxobutanoate hydroxymethyltransferase.